A 253-amino-acid polypeptide reads, in one-letter code: Imidazole glycerol phosphate synthase subunit HisF (253 aa).

Residues aspartate 11 and aspartate 130 contribute to the active site.

This sequence belongs to the HisA/HisF family. In terms of assembly, heterodimer of HisH and HisF.

The protein localises to the cytoplasm. The catalysed reaction is 5-[(5-phospho-1-deoxy-D-ribulos-1-ylimino)methylamino]-1-(5-phospho-beta-D-ribosyl)imidazole-4-carboxamide + L-glutamine = D-erythro-1-(imidazol-4-yl)glycerol 3-phosphate + 5-amino-1-(5-phospho-beta-D-ribosyl)imidazole-4-carboxamide + L-glutamate + H(+). It functions in the pathway amino-acid biosynthesis; L-histidine biosynthesis; L-histidine from 5-phospho-alpha-D-ribose 1-diphosphate: step 5/9. Its function is as follows. IGPS catalyzes the conversion of PRFAR and glutamine to IGP, AICAR and glutamate. The HisF subunit catalyzes the cyclization activity that produces IGP and AICAR from PRFAR using the ammonia provided by the HisH subunit. The polypeptide is Imidazole glycerol phosphate synthase subunit HisF (Methylibium petroleiphilum (strain ATCC BAA-1232 / LMG 22953 / PM1)).